Reading from the N-terminus, the 370-residue chain is Type II restriction enzyme MjaII (370 aa).

This sequence belongs to the TdeIII type II restriction endonuclease family.

The enzyme catalyses Endonucleolytic cleavage of DNA to give specific double-stranded fragments with terminal 5'-phosphates.. Its function is as follows. A P subtype restriction enzyme that recognizes the double-stranded sequence 5'-GGNCC-3'; the cleavage site is unknown. In Methanocaldococcus jannaschii (strain ATCC 43067 / DSM 2661 / JAL-1 / JCM 10045 / NBRC 100440) (Methanococcus jannaschii), this protein is Type II restriction enzyme MjaII (mjaIIR).